We begin with the raw amino-acid sequence, 528 residues long: Na(+)/H(+) antiporter NhaB (528 aa).

Helical transmembrane passes span 11–31 (VNFLGNSPKWYKLAILSFLVI), 67–87 (PGGLLAIQAVAIGMTSPSQVL), 98–118 (LLLIFMVAGIYFMKQLLLFVF), 140–160 (AFLSAFLDALTVIAVIIAVGI), 240–260 (FFIRMSPVTIPVLLSGLLTCV), 311–331 (LVAGLALHLASVGLIGLSVII), 350–370 (EEALPFTALLAVFFAIVGVII), 391–411 (LVVFFIANGVLSMVSDNVFVG), 449–469 (ATPNGQAAFLFLLTSALAPLI), and 476–496 (MVIMALPYTLVLSIVGIVTIE).

The protein belongs to the NhaB Na(+)/H(+) (TC 2.A.34) antiporter family.

The protein resides in the cell inner membrane. The catalysed reaction is 2 Na(+)(in) + 3 H(+)(out) = 2 Na(+)(out) + 3 H(+)(in). Its function is as follows. Na(+)/H(+) antiporter that extrudes sodium in exchange for external protons. In Shewanella denitrificans (strain OS217 / ATCC BAA-1090 / DSM 15013), this protein is Na(+)/H(+) antiporter NhaB.